The following is a 245-amino-acid chain: Cell division protein ZapD (245 aa).

Belongs to the ZapD family. Interacts with FtsZ.

It is found in the cytoplasm. Cell division factor that enhances FtsZ-ring assembly. Directly interacts with FtsZ and promotes bundling of FtsZ protofilaments, with a reduction in FtsZ GTPase activity. The protein is Cell division protein ZapD of Photobacterium profundum (strain SS9).